A 255-amino-acid chain; its full sequence is Thiazole synthase (255 aa).

The Schiff-base intermediate with DXP role is filled by Lys-97. 1-deoxy-D-xylulose 5-phosphate contacts are provided by residues Gly-158, 184 to 185 (AG), and 206 to 207 (NT).

Belongs to the ThiG family. Homotetramer. Forms heterodimers with either ThiH or ThiS.

It localises to the cytoplasm. The catalysed reaction is [ThiS sulfur-carrier protein]-C-terminal-Gly-aminoethanethioate + 2-iminoacetate + 1-deoxy-D-xylulose 5-phosphate = [ThiS sulfur-carrier protein]-C-terminal Gly-Gly + 2-[(2R,5Z)-2-carboxy-4-methylthiazol-5(2H)-ylidene]ethyl phosphate + 2 H2O + H(+). It participates in cofactor biosynthesis; thiamine diphosphate biosynthesis. Its function is as follows. Catalyzes the rearrangement of 1-deoxy-D-xylulose 5-phosphate (DXP) to produce the thiazole phosphate moiety of thiamine. Sulfur is provided by the thiocarboxylate moiety of the carrier protein ThiS. In vitro, sulfur can be provided by H(2)S. The polypeptide is Thiazole synthase (Acetivibrio thermocellus (strain ATCC 27405 / DSM 1237 / JCM 9322 / NBRC 103400 / NCIMB 10682 / NRRL B-4536 / VPI 7372) (Clostridium thermocellum)).